The chain runs to 248 residues: Protein maestro (248 aa).

Residues 1 to 23 are disordered; that stretch reads MEQTRKIPNQPLPTPTSQSKKRR. Residues 128 to 163 form an HEAT repeat; sequence SFFIDITLQARTLLDDEDDSVRYSAFVLFGQLASFA.

In terms of tissue distribution, prominent expression seen in testis, brain, liver and heart. Weakly expressed in the kidney.

The protein resides in the nucleus. It is found in the nucleolus. The polypeptide is Protein maestro (Mro) (Mus musculus (Mouse)).